The primary structure comprises 645 residues: Protein LHY (645 aa).

Serine 6 is subject to Phosphoserine. The HTH myb-type domain occupies 19–73 (TITKQRERWTEDEHERFLEALRLYGRAWQRIEEHIGTKTAVQIRSHAQKFFTKLE). A DNA-binding region (H-T-H motif) is located at residues 46-69 (WQRIEEHIGTKTAVQIRSHAQKFF). 4 disordered regions span residues 89-127 (IEIPPPRPKRKPNTPYPRKPGNNGTSSSQVSSAKDAKLV), 149-212 (EKTS…GTTV), 410-437 (QNLASKSPASSSDDSDETGVTKLNADSK), and 458-500 (AQKK…TDEN). Polar residues predominate over residues 110–120 (NNGTSSSQVSS). The span at 149 to 158 (EKTSTGKENQ) shows a compositional bias: basic and acidic residues. Residues 159–169 (DENCSGVSTVN) are compositionally biased toward polar residues. A compositionally biased stretch (basic and acidic residues) spans 197–207 (VPKKNKDKDGN). Polar residues predominate over residues 468–478 (SCGSNTPSGSD). Basic and acidic residues predominate over residues 483–498 (ALDKMEKDKEDVKETD).

As to quaternary structure, homodimer or heterodimer with CCA1. Interacts with CCA1 (via internal domain); independently of photoperiod. Functions probably as part of a large complex. Interacts with CKB1 and CKB3. Interacts with LNK1 and LNK2. Phosphorylated by CK2. Expressed in leaves, roots, stems, flowers and siliques.

The protein resides in the nucleus. Its function is as follows. Transcription factor involved in the circadian clock. Binds to the promoter region of APRR1/TOC1 and TCP21/CHE to repress their transcription. Represses both CCA1 and itself. May recognize the promoter of JMJ14 to regulates its expression during the night in a circadian manner. The protein is Protein LHY of Arabidopsis thaliana (Mouse-ear cress).